A 270-amino-acid polypeptide reads, in one-letter code: Regulatory protein RecX (270 aa).

It belongs to the RecX family.

It localises to the cytoplasm. Modulates RecA activity. This Bacillus cereus (strain ZK / E33L) protein is Regulatory protein RecX.